A 977-amino-acid polypeptide reads, in one-letter code: MRTAGRDPVPRRSPRWRRAVPLCETSAGRRVTQLRGDDLRRPATMKGKERSPVKAKRSRGGEDSTSRGERSKKLGGSGGSNGSSSGKTDSGGGSRRSLHLDKSSSRGGSREYDTGGGSSSSRLHSYSSPSTKNSSGGGESRSSSRGGGGESRSSGAASSAPGGGDGAEYKTLKISELGSQLSDEAVEDGLFHEFKRFGDVSVKISHLSGSGSGDERVAFVNFRRPEDARAAKHARGRLVLYDRPLKIEAVYVSRRRSRSPLDKDTYPPSASVVGASVGGHRHPPGGGGGQRSLSPGGAALGYRDYRLQQLALGRLPPPPPPPLPRDLERERDYPFYERVRPAYSLEPRVGAGAGAAPFREVDEISPEDDQRANRTLFLGNLDITVTESDLRRAFDRFGVITEVDIKRPSRGQTSTYGFLKFENLDMSHRAKLAMSGKIIIRNPIKIGYGKATPTTRLWVGGLGPWVPLAALAREFDRFGTIRTIDYRKGDSWAYIQYESLDAAHAAWTHMRGFPLGGPDRRLRVDFADTEHRYQQQYLQPLPLTHYELVTDAFGHRAPDPLRGARDRTPPLLYRDRDRDLYPDSDWVPPPPPVRERSTRTAATSVPAYEPLDSLDRRRDGWSLDRDRGDRDLPSSRDQPRKRRLPEESGGRHLDRSPESDRPRKRHCAPSPDRSPELSSSRDRYNSDNDRSSRLLLERPSPIRDRRGSLEKSQGDKRDRKNSASAERDRKHRTTAPTEGKSPLKKEDRSDGSAPSTSTASSKLKSPSQKQDGGTAPVASASPKLCLAWQGMLLLKNSNFPSNMHLLQGDLQVASSLLVEGSTGGKVAQLKITQRLRLDQPKLDEVTRRIKVAGPNGYAILLAVPGSSDSRSSSSSAASDTATSTQRPLRNLVSYLKQKQAAGVISLPVGGNKDKENTGVLHAFPPCEFSQQFLDSPAKALAKSEEDYLVMIIVRGFGFQIGVRYENKKRENLALTLL.

4 stretches are compositionally biased toward basic and acidic residues: residues 1-10 (MRTAGRDPVP), 35-52 (RGDDLRRPATMKGKERSP), 59-72 (RGGEDSTSRGERSK), and 98-113 (LHLDKSSSRGGSREYD). Residues 1 to 167 (MRTAGRDPVP…SSAPGGGDGA (167 aa)) form a disordered region. Residue Ser109 is modified to Phosphoserine. The segment covering 119 to 130 (SSSRLHSYSSPS) has biased composition (low complexity). The segment covering 135–150 (SGGGESRSSSRGGGGE) has biased composition (gly residues). Residues 151 to 160 (SRSSGAASSA) are compositionally biased toward low complexity. The region spanning 170-252 (KTLKISELGS…RPLKIEAVYV (83 aa)) is the RRM 1 domain. A phosphoserine mark is found at Ser179, Ser208, and Ser210. A Glycyl lysine isopeptide (Lys-Gly) (interchain with G-Cter in SUMO2) cross-link involves residue Lys246. Residues Ser253, Ser257, and Ser259 each carry the phosphoserine modification. Residues 256 to 298 (RSRSPLDKDTYPPSASVVGASVGGHRHPPGGGGGQRSLSPGGA) form a disordered region. Tyr266 is modified (phosphotyrosine). Ser292, Ser294, and Ser365 each carry phosphoserine. RRM domains lie at 374 to 451 (RTLF…YGKA) and 455 to 529 (TRLW…FADT). Residues Lys406, Lys420, and Lys445 each participate in a glycyl lysine isopeptide (Lys-Gly) (interchain with G-Cter in SUMO2) cross-link. Position 450 is an N6-acetyllysine (Lys450). Composition is skewed to basic and acidic residues over residues 555-581 (HRAPDPLRGARDRTPPLLYRDRDRDLY) and 613-661 (SLDR…ESDR). The segment at 555–778 (HRAPDPLRGA…KQDGGTAPVA (224 aa)) is disordered. Residue Thr568 is modified to Phosphothreonine. Arg578 bears the Asymmetric dimethylarginine; alternate; by PRMT1 mark. At Arg578 the chain carries Omega-N-methylarginine; alternate; by PRMT1. 6 positions are modified to phosphoserine: Ser622, Ser656, Ser670, Ser674, Ser700, and Ser741. 2 stretches are compositionally biased toward basic and acidic residues: residues 673 to 728 (RSPE…AERD) and 741 to 750 (SPLKKEDRSD). Residue Lys744 forms a Glycyl lysine isopeptide (Lys-Gly) (interchain with G-Cter in SUMO2) linkage. Positions 752–771 (SAPSTSTASSKLKSPSQKQD) are enriched in polar residues. Residues Ser765, Ser767, and Ser781 each carry the phosphoserine modification. In terms of domain architecture, SPOC spans 777–956 (VASASPKLCL…YLVMIIVRGF (180 aa)). A disordered region spans residues 865–884 (GSSDSRSSSSSAASDTATST). Residues 866–884 (SSDSRSSSSSAASDTATST) are compositionally biased toward low complexity. Position 935 is a phosphoserine (Ser935).

This sequence belongs to the RRM Spen family. In terms of assembly, component of the WMM complex, a N6-methyltransferase complex composed of a catalytic subcomplex, named MAC, and of an associated subcomplex, named MACOM. The MAC subcomplex is composed of METTL3 and METTL14. The MACOM subcomplex is composed of WTAP, ZC3H13, CBLL1/HAKAI, VIRMA, and, in some cases of RBM15 (RBM15 or RBM15B). Also a component of a MACOM-like complex, named WTAP complex, composed of WTAP, ZC3H13, CBLL1, VIRMA, RBM15, BCLAF1 and THRAP3. Interacts with RBPJ. Interacts (via SPOC domain) with SETD1B. Interacts with NXF1, the interaction is required to promote mRNA export. Interacts with SF3B1. As to quaternary structure, (Microbial infection) Interacts with Epstein-Barr virus BSFL2/BMLF1. In terms of processing, methylated at Arg-578 by PRMT1, leading to promote ubiquitination by CNOT4 and subsequent degradation by the proteasome. Post-translationally, ubiquitinated by CNOT4 following methylation at Arg-578 by PRMT1.

It is found in the nucleus speckle. The protein resides in the nucleus. It localises to the nucleoplasm. Its subcellular location is the nucleus envelope. The protein localises to the nucleus membrane. In terms of biological role, RNA-binding protein that acts as a key regulator of N6-methyladenosine (m6A) methylation of RNAs, thereby regulating different processes, such as hematopoietic cell homeostasis, alternative splicing of mRNAs and X chromosome inactivation mediated by Xist RNA. Associated component of the WMM complex, a complex that mediates N6-methyladenosine (m6A) methylation of RNAs, a modification that plays a role in the efficiency of mRNA splicing and RNA processing. Plays a key role in m6A methylation, possibly by binding target RNAs and recruiting the WMM complex. Involved in random X inactivation mediated by Xist RNA: acts by binding Xist RNA and recruiting the WMM complex, which mediates m6A methylation, leading to target YTHDC1 reader on Xist RNA and promoting transcription repression activity of Xist. Required for the development of multiple tissues, such as the maintenance of the homeostasis of long-term hematopoietic stem cells and for megakaryocyte (MK) and B-cell differentiation. Regulates megakaryocyte differentiation by regulating alternative splicing of genes important for megakaryocyte differentiation; probably regulates alternative splicing via m6A regulation. Required for placental vascular branching morphogenesis and embryonic development of the heart and spleen. Acts as a regulator of thrombopoietin response in hematopoietic stem cells by regulating alternative splicing of MPL. May also function as an mRNA export factor, stimulating export and expression of RTE-containing mRNAs which are present in many retrotransposons that require to be exported prior to splicing. High affinity binding of pre-mRNA to RBM15 may allow targeting of the mRNP to the export helicase DBP5 in a manner that is independent of splicing-mediated NXF1 deposition, resulting in export prior to splicing. May be implicated in HOX gene regulation. This chain is RNA-binding protein 15, found in Homo sapiens (Human).